The chain runs to 317 residues: MVKITIMGASGTIGKTVAFNLAEKDVIDEIIMFSRPASHERVKGEILDMYDALAAEDIDCELKASSDYADLAGSSIVLITSGVPRKEGMSRLDLAVPNSKIVQEYSKQIAIHAPDSVILIVTNPVDVMTSIALKTSGFDKKRVIGLGNHLDSLRLKTLLSKHFHINSREIHTRVIGEHGDHMVPLLSSTTIGGILLKSFVEYMDLDVPKLVETLKNSGNNIISKKGATEYGPSYAISNLILTIANDTRKILTVSTYLEGEVEGVYDVSLGVPVILCKHGIKRIVPLKMNDEERTEFFDAARTVKKTTYELEKMLNKE.

An NADP(+)-binding site is contributed by 8–14 (GASGTIG). Positions 85 and 91 each coordinate substrate. Residues N98 and 121–123 (VTN) contribute to the NADP(+) site. The substrate site is built by N123 and R154. The active-site Proton acceptor is the H178.

Belongs to the LDH/MDH superfamily.

It catalyses the reaction (S)-malate + NADP(+) = oxaloacetate + NADPH + H(+). It carries out the reaction (S)-malate + NAD(+) = oxaloacetate + NADH + H(+). In terms of biological role, catalyzes the reversible oxidation of malate to oxaloacetate. The chain is Malate dehydrogenase (mdh) from Methanosphaera stadtmanae (strain ATCC 43021 / DSM 3091 / JCM 11832 / MCB-3).